An 802-amino-acid chain; its full sequence is MRVLWVLGLCCVLLTFGFVRADDEVDVDGTVEEDLGKSREGSRTDDEVVQREEEAIQLDGLNASQIRELREKSEKFAFQAEVNRMMKLIINSLYKNKEIFLRELISNASDALDKIRLISLTDENALAGNEELTVKIKCDKEKNLLHVTDTGVGMTREELVKNLGTIAKSGTSEFLNKMTEAQEDGQSTSELIGQFGVGFYSAFLVADKVIVTSKHNNDTQHIWESDSNEFSVIADPRGNTLGRGTTITLVLKEEASDYLELDTIKNLVRKYSQFINFPIYVWSSKTETVEEPLEEDEAAKEEKEESDDEAAVEEEEEEKKPKTKKVEKTVWDWELMNDIKPIWQRPSKEVEEDEYKAFYKSFSKESDDPMAYIHFTAEGEVTFKSILFVPTSAPRGLFDEYGSKKSDYIKLYVRRVFITDDFHDMMPKYLNFVKGVVDSDDLPLNVSRETLQQHKLLKVIRKKLVRKTLDMIKKIADEKYNDTFWKEFGTNIKLGVIEDHSNRTRLAKLLRFQSSHHSTDITSLDQYVERMKEKQDKIYFMAGSSRKEAESSPFVERLLKKGYEVIYLTEPVDEYCIQALPEFDGKRFQNVAKEGVKFDESEKTKESREATEKEFEPLLNWMKDKALKDKIEKAVVSQRLTESPCALVASQYGWSGNMERIMKAQAYQTGKDISTNYYASQKKTFEINPRHPLIRDMLRRIKEDEDDKTVMDLAVVLFETATLRSGYLLPDTKAYGDRIERMLRLSLNIDPEAQVEEEPEEEPEDTSEDAEDSEQDEGEEMDAGTEEEEEETEKESTEKDEL.

Residues methionine 1–alanine 21 form the signal peptide. An SRT pseudosubstrate motif motif is present at residues serine 42–threonine 44. Residue asparagine 62 is glycosylated (N-linked (GlcNAc...) asparagine). Serine 64 is subject to Phosphoserine. The N-linked (GlcNAc...) asparagine glycan is linked to asparagine 107. Residues asparagine 107, aspartate 149, and asparagine 162 each coordinate ATP. N6-(2-hydroxyisobutyryl)lysine is present on lysine 168. At serine 172 the chain carries Phosphoserine. Phenylalanine 199 serves as a coordination point for ATP. Asparagine 217 carries an N-linked (GlcNAc...) asparagine glycan. Residues glutamate 290–glutamate 317 are compositionally biased toward acidic residues. The interval glutamate 290–threonine 323 is disordered. Residues serine 306 and serine 403 each carry the phosphoserine modification. The residue at position 404 (lysine 404) is an N6-succinyllysine. Asparagine 445 is a glycosylation site (N-linked (GlcNAc...) asparagine). Phosphoserine is present on serine 447. Lysine 479 carries the N6-acetyllysine modification. Residues asparagine 481 and asparagine 502 are each glycosylated (N-linked (GlcNAc...) asparagine). Lysine 633 carries the post-translational modification N6-succinyllysine. The segment at isoleucine 749–leucine 802 is disordered. Acidic residues predominate over residues alanine 753–glutamate 793. The residue at position 785 (threonine 785) is a Phosphothreonine. The Prevents secretion from ER signature appears at lysine 799 to leucine 802.

Belongs to the heat shock protein 90 family. In terms of assembly, homodimer; disulfide-linked. Component of an EIF2 complex at least composed of CELF1/CUGBP1, CALR, CALR3, EIF2S1, EIF2S2, HSP90B1 and HSPA5. Part of a large chaperone multiprotein complex comprising DNAJB11, HSP90B1, HSPA5, HYOU, PDIA2, PDIA4, PDIA6, PPIB, SDF2L1, UGGT1 and very small amounts of ERP29, but not, or at very low levels, CALR nor CANX. Hyperglycosylated form interacts with OS9; promoting its degradation by the endoplasmic reticulum associated degradation (ERAD). Interacts with AIMP1; regulates its retention in the endoplasmic reticulum. Interacts with CNPY3; this interaction is disrupted in the presence of ATP. Interacts with TLR4, TLR9 and TLR11, but not with TLR3. Interacts with MZB1 in a calcium-dependent manner. Interacts with METTL23. Interacts with IL1B; the interaction facilitates cargo translocation into the ERGIC. Interacts with EIF2AK3. In terms of processing, phosphorylated by CK2. N-glycosylated cotranslationally at Asn-217 by STT3A-containing OST-A complex: this glycosylation is constitutive. In response to various stress, 5 additional facultative sites (Asn-62, Asn-107, Asn-445, Asn-481 and Asn-502) can be glycosylated post-translationally by STT3B-containing OST-B complex, leading to a hyperglycosylated form that is degraded by the ER-associated degradation (ERAD) pathway. In normal conditions, the OST-A complex together with CCDC134 prevent glycosylation at facultative sites during protein folding, thereby preventing hyperglycosylation. Mechanistically, nascent HSP90B1 is tethered during translation to a specialized CCDC134-containing translocon that forms a microenvironment for its folding, in which STT3A associates with the SRT pseudosubstrate motif, and prevents access to facultative glycosylation sites until folding is completed, rendering its facultative sites inaccessible to the OST-B complex.

It localises to the endoplasmic reticulum lumen. The protein localises to the sarcoplasmic reticulum lumen. The protein resides in the melanosome. The enzyme catalyses ATP + H2O = ADP + phosphate + H(+). In terms of biological role, ATP-dependent chaperone involved in the processing of proteins in the endoplasmic reticulum, regulating their transport. Together with MESD, acts as a modulator of the Wnt pathway by promoting the folding of LRP6, a coreceptor of the canonical Wnt pathway. When associated with CNPY3, required for proper folding of Toll-like receptors. Promotes folding and trafficking of TLR4 to the cell surface. May participate in the unfolding of cytosolic leaderless cargos (lacking the secretion signal sequence) such as the interleukin 1/IL-1 to facilitate their translocation into the ERGIC (endoplasmic reticulum-Golgi intermediate compartment) and secretion; the translocation process is mediated by the cargo receptor TMED10. This Mus musculus (Mouse) protein is Endoplasmin (Hsp90b1).